The primary structure comprises 503 residues: UDP-N-acetylmuramoylalanine--D-glutamate ligase (503 aa).

Residue 129–135 coordinates ATP; it reads GTNGKTT.

Belongs to the MurCDEF family.

It is found in the cytoplasm. It carries out the reaction UDP-N-acetyl-alpha-D-muramoyl-L-alanine + D-glutamate + ATP = UDP-N-acetyl-alpha-D-muramoyl-L-alanyl-D-glutamate + ADP + phosphate + H(+). It functions in the pathway cell wall biogenesis; peptidoglycan biosynthesis. Cell wall formation. Catalyzes the addition of glutamate to the nucleotide precursor UDP-N-acetylmuramoyl-L-alanine (UMA). The chain is UDP-N-acetylmuramoylalanine--D-glutamate ligase from Burkholderia orbicola (strain MC0-3).